Here is a 1377-residue protein sequence, read N- to C-terminus: DNA-directed RNA polymerase subunit beta (1377 aa).

It belongs to the RNA polymerase beta chain family. In terms of assembly, the RNAP catalytic core consists of 2 alpha, 1 beta, 1 beta' and 1 omega subunit. When a sigma factor is associated with the core the holoenzyme is formed, which can initiate transcription.

It carries out the reaction RNA(n) + a ribonucleoside 5'-triphosphate = RNA(n+1) + diphosphate. In terms of biological role, DNA-dependent RNA polymerase catalyzes the transcription of DNA into RNA using the four ribonucleoside triphosphates as substrates. This chain is DNA-directed RNA polymerase subunit beta, found in Orientia tsutsugamushi (strain Boryong) (Rickettsia tsutsugamushi).